Consider the following 346-residue polypeptide: MANAYKQAGVDIEAGYEAVSRMKKHVQTTMRKEVLGGLGGFGGMFDLSKFALEEPVLVSGTDGVGTKLMLAFMADKHDTIGIDAVAMCVNDIVVQGAEPLFFLDYIACGKAEPSKIENIVKGISEGCRQAGCALIGGETAEMPGMYSTEEYDLAGFTVGIVDKKKIVTGEKIEAGHVLIGLASSGIHSNGYSLVRKVLLEDGELSLDRIYGRLELPLGEELLKPTKIYVKPILELLKKHEVYGMAHITGGGFIENIPRMLPEGIGAEIELGSWQVQPIFSLLQEVGKLEEKEMFNIFNMGIGMVVAVKEEEAKDIVRLLEEQGEKAHIIGHTVQGSGVTFIEGTEV.

Belongs to the AIR synthase family.

The protein localises to the cytoplasm. It carries out the reaction 2-formamido-N(1)-(5-O-phospho-beta-D-ribosyl)acetamidine + ATP = 5-amino-1-(5-phospho-beta-D-ribosyl)imidazole + ADP + phosphate + H(+). It functions in the pathway purine metabolism; IMP biosynthesis via de novo pathway; 5-amino-1-(5-phospho-D-ribosyl)imidazole from N(2)-formyl-N(1)-(5-phospho-D-ribosyl)glycinamide: step 2/2. This is Phosphoribosylformylglycinamidine cyclo-ligase from Bacillus mycoides (strain KBAB4) (Bacillus weihenstephanensis).